We begin with the raw amino-acid sequence, 441 residues long: 3-oxo-glucose-6-phosphate:glutamate aminotransferase (441 aa).

A substrate-binding site is contributed by 98 to 99; the sequence is TS. Residue 125 to 126 participates in pyridoxal 5'-phosphate binding; that stretch reads GT. Phe151 lines the substrate pocket. Positions 225 and 242 each coordinate pyridoxal 5'-phosphate. 244–246 contributes to the substrate binding site; that stretch reads NPY. Lys247 is modified (N6-(pyridoxal phosphate)lysine). Tyr274 and Lys282 together coordinate substrate. Residue Asn292 coordinates pyridoxal 5'-phosphate. Tyr379 contacts substrate.

Belongs to the DegT/DnrJ/EryC1 family. In terms of assembly, homodimer. It depends on pyridoxal 5'-phosphate as a cofactor.

It catalyses the reaction 3-dehydro-D-glucose 6-phosphate + L-glutamate = D-kanosamine 6-phosphate + 2-oxoglutarate. Its pathway is antibiotic biosynthesis; kanosamine biosynthesis. Involved in the biosynthesis of kanosamine (3-amino-3-deoxy-D-glucose), which is known to have antibiotic and antifungal properties, and to be a precursor of the antibiotic neotrehalosadiamine (3,3'-diamino-3,3'-dideoxy-alpha,beta-trehalose (NTD)). Catalyzes the reversible pyridoxal phosphate-dependent transamination of 3-dehydro-alpha-D-glucose 6-phosphate to form alpha-D-kanosamine-6-phosphate. It can only use alpha-anomer and glutamate is the only amino donor. In Bacillus subtilis (strain 168), this protein is 3-oxo-glucose-6-phosphate:glutamate aminotransferase (ntdA).